Here is a 339-residue protein sequence, read N- to C-terminus: ADP,ATP carrier protein (339 aa).

Solcar repeat units lie at residues 39–133 (MAFV…IKGL), 145–234 (RFFV…AKGV), and 246–328 (AKWA…IKKF). A run of 5 helical transmembrane segments spans residues 41-70 (FVKDLLAGGTAGAISKTAVAPIERVKLLLQ), 110-134 (LANVVRYFPTQAFNFAFKDTIKGLF), 144-164 (WRFFVVNLASGGLAGAGSLLI), 212-232 (VSVQGIIVYRGAYFGLYDTAK), and 245-265 (FAKWAVAQAVTAGAGVLSYPF). Positions 115 and 127 each coordinate ADP. Arg-269 lines the ADP pocket. Residues 269 to 274 (RRRLMM) are important for transport activity. The Nucleotide carrier signature motif motif lies at 269 to 274 (RRRLMM). The chain crosses the membrane as a helical span at residues 305-322 (AWSNVLRGAGGAFVLVLY).

This sequence belongs to the mitochondrial carrier (TC 2.A.29) family. In terms of assembly, monomer.

It localises to the mitochondrion inner membrane. The catalysed reaction is ADP(in) + ATP(out) = ADP(out) + ATP(in). The matrix-open state (m-state) is inhibited by the membrane-permeable bongkrekic acid (BKA). The cytoplasmic-open state (c-state) is inhibited by the membrane-impermeable toxic inhibitor carboxyatractyloside (CATR). Functionally, ADP:ATP antiporter that mediates import of ADP into the mitochondrial matrix for ATP synthesis, and export of ATP out to fuel the cell. Cycles between the cytoplasmic-open state (c-state) and the matrix-open state (m-state): operates by the alternating access mechanism with a single substrate-binding site intermittently exposed to either the cytosolic (c-state) or matrix (m-state) side of the inner mitochondrial membrane. The polypeptide is ADP,ATP carrier protein (Parachlorella kessleri (Green alga)).